Consider the following 63-residue polypeptide: Large ribosomal subunit protein bL33m (63 aa).

The protein belongs to the bacterial ribosomal protein bL33 family.

The protein localises to the mitochondrion. The polypeptide is Large ribosomal subunit protein bL33m (mrpl33) (Dictyostelium discoideum (Social amoeba)).